The following is a 288-amino-acid chain: Polyamine aminopropyltransferase (288 aa).

One can recognise a PABS domain in the interval 9-238 (ETLHDQFGQY…GIMTFAWATD (230 aa)). Glutamine 33 provides a ligand contact to S-methyl-5'-thioadenosine. Spermidine contacts are provided by histidine 64 and aspartate 88. S-methyl-5'-thioadenosine-binding positions include glutamate 108 and 140–141 (DG). Aspartate 158 functions as the Proton acceptor in the catalytic mechanism. 158 to 161 (DCTD) lines the spermidine pocket. Proline 165 is an S-methyl-5'-thioadenosine binding site.

This sequence belongs to the spermidine/spermine synthase family. In terms of assembly, homodimer or homotetramer.

Its subcellular location is the cytoplasm. It catalyses the reaction S-adenosyl 3-(methylsulfanyl)propylamine + putrescine = S-methyl-5'-thioadenosine + spermidine + H(+). It functions in the pathway amine and polyamine biosynthesis; spermidine biosynthesis; spermidine from putrescine: step 1/1. Catalyzes the irreversible transfer of a propylamine group from the amino donor S-adenosylmethioninamine (decarboxy-AdoMet) to putrescine (1,4-diaminobutane) to yield spermidine. This chain is Polyamine aminopropyltransferase, found in Shigella flexneri serotype 5b (strain 8401).